The following is a 386-amino-acid chain: Protein MGF 360-4L (386 aa).

The protein belongs to the asfivirus MGF 360 family.

Plays a role in virus cell tropism, and may be required for efficient virus replication in macrophages. This chain is Protein MGF 360-4L, found in African swine fever virus (isolate Warthog/Namibia/Wart80/1980) (ASFV).